The following is a 277-amino-acid chain: Glycerol-3-phosphate acyltransferase (277 aa).

The next 5 helical transmembrane spans lie at Phe3 to Val23, Ile55 to Leu75, Pro79 to Phe99, Ile111 to Leu131, and Leu155 to Leu175. The segment at Lys231 to Glu277 is disordered. 2 stretches are compositionally biased toward basic residues: residues Lys240–Thr253 and Lys262–Lys271.

This sequence belongs to the PlsY family. As to quaternary structure, probably interacts with PlsX.

It localises to the cell inner membrane. It carries out the reaction an acyl phosphate + sn-glycerol 3-phosphate = a 1-acyl-sn-glycero-3-phosphate + phosphate. It functions in the pathway lipid metabolism; phospholipid metabolism. In terms of biological role, catalyzes the transfer of an acyl group from acyl-phosphate (acyl-PO(4)) to glycerol-3-phosphate (G3P) to form lysophosphatidic acid (LPA). This enzyme utilizes acyl-phosphate as fatty acyl donor, but not acyl-CoA or acyl-ACP. This Legionella pneumophila (strain Lens) protein is Glycerol-3-phosphate acyltransferase.